Here is a 201-residue protein sequence, read N- to C-terminus: 3-isopropylmalate dehydratase small subunit (201 aa).

This sequence belongs to the LeuD family. LeuD type 1 subfamily. As to quaternary structure, heterodimer of LeuC and LeuD.

It catalyses the reaction (2R,3S)-3-isopropylmalate = (2S)-2-isopropylmalate. Its pathway is amino-acid biosynthesis; L-leucine biosynthesis; L-leucine from 3-methyl-2-oxobutanoate: step 2/4. Catalyzes the isomerization between 2-isopropylmalate and 3-isopropylmalate, via the formation of 2-isopropylmaleate. The polypeptide is 3-isopropylmalate dehydratase small subunit (Cereibacter sphaeroides (strain KD131 / KCTC 12085) (Rhodobacter sphaeroides)).